The primary structure comprises 153 residues: Nucleoside diphosphate kinase 3 (153 aa).

The ATP site is built by lysine 11, phenylalanine 59, arginine 87, threonine 93, arginine 104, and asparagine 114. Histidine 117 acts as the Pros-phosphohistidine intermediate in catalysis.

Belongs to the NDK family. Homohexamer. Mg(2+) serves as cofactor.

It localises to the plastid. The protein resides in the chloroplast thylakoid lumen. The catalysed reaction is a 2'-deoxyribonucleoside 5'-diphosphate + ATP = a 2'-deoxyribonucleoside 5'-triphosphate + ADP. It catalyses the reaction a ribonucleoside 5'-diphosphate + ATP = a ribonucleoside 5'-triphosphate + ADP. Functionally, major role in the synthesis of nucleoside triphosphates other than ATP. The ATP gamma phosphate is transferred to the NDP beta phosphate via a ping-pong mechanism, using a phosphorylated active-site intermediate. Shows the highest specificity towards GDP. In Spinacia oleracea (Spinach), this protein is Nucleoside diphosphate kinase 3.